A 54-amino-acid polypeptide reads, in one-letter code: UPF0391 membrane protein R00741 (54 aa).

The next 2 helical transmembrane spans lie at 5–25 (ALVFLIVAIIAGVLGFGGIAG) and 30–50 (IAQVLFFLFLIFLVISLVAGL).

It belongs to the UPF0391 family.

It localises to the cell membrane. The chain is UPF0391 membrane protein R00741 from Rhizobium meliloti (strain 1021) (Ensifer meliloti).